A 233-amino-acid polypeptide reads, in one-letter code: Phosducin-like protein C2A9.09 (233 aa).

Residues 58–212 (EDEEDDEFLQ…DIAALKDPQN (155 aa)) form the Phosducin domain. Residues 86 to 233 (FGSVYPISKP…VNDDLDDDFD (148 aa)) are thioredoxin fold. The interval 207–233 (LKDPQNAEDELGKRDSSVNDDLDDDFD) is disordered. A phosphoserine mark is found at S222 and S223. A compositionally biased stretch (acidic residues) spans 224–233 (VNDDLDDDFD).

The protein belongs to the phosducin family.

The sequence is that of Phosducin-like protein C2A9.09 from Schizosaccharomyces pombe (strain 972 / ATCC 24843) (Fission yeast).